The primary structure comprises 296 residues: tRNA dimethylallyltransferase (296 aa).

2–9 (GPTASGKT) serves as a coordination point for ATP. 4-9 (TASGKT) provides a ligand contact to substrate. 3 interaction with substrate tRNA regions span residues 27 to 30 (DSAL), 151 to 155 (QRLSR), and 232 to 237 (RCVGYR).

This sequence belongs to the IPP transferase family. Monomer. Requires Mg(2+) as cofactor.

The enzyme catalyses adenosine(37) in tRNA + dimethylallyl diphosphate = N(6)-dimethylallyladenosine(37) in tRNA + diphosphate. In terms of biological role, catalyzes the transfer of a dimethylallyl group onto the adenine at position 37 in tRNAs that read codons beginning with uridine, leading to the formation of N6-(dimethylallyl)adenosine (i(6)A). This is tRNA dimethylallyltransferase from Shewanella sp. (strain ANA-3).